We begin with the raw amino-acid sequence, 900 residues long: Periodic tryptophan protein 2 (900 aa).

WD repeat units follow at residues 10–47 (GAPYRGGNAVITKNTQLISPVGNRVSVTDLSKNHSVTL), 50–89 (ETSTNICRLASSPDGTFLLAVDEQNRCLFINLPRRVVLHR), 91–129 (TFKDKVGALKFSPNGKFIAVGIGKLVEIWRSPGFRRAVL), 139–178 (NSDDKVVSLEWSLDSDYLLVGSRDLAARLFCVRKLKGVLN), and 185–229 (GHRD…VKMD). The disordered stretch occupies residues 228–284 (MDESEDGHSEPPSPVTPDRADEVMVENGGGVGTELKKRKEYDGKGLESDEEGDDDDE). Over residues 261–274 (ELKKRKEYDGKGLE) the composition is skewed to basic and acidic residues. At Ser-275 the chain carries Phosphoserine. Over residues 275–284 (SDEEGDDDDE) the composition is skewed to acidic residues. WD repeat units follow at residues 302-341 (QASAKVTACDYHQGLDMVVVGFSNGVFGLYQMPDFICIHL), 344-384 (ISRQ…YILK), 387-426 (GHYFDVNCVTYSPDSQLLATGADDNKVKVWNVMSGTCFIT), 429-468 (EHTNAVTALHFMADNHSLLSASLDGTVRAWDFKRYKNYKT), 472-512 (PTPR…IKDI), 515-554 (GHEAPVHGLMFSPLTQLLASSSWDYTVRLWDVFASKGTVE), 557-596 (RHNHDVLTVAFRPDGKQLASSTLDGQINFWDTIEGVLMYT), and 619-658 (SSGKCFTTLCYSADGGYILAAGTSRYICMYDIADQVLLRR). Residues 684–720 (PIDLIDDDNSDEEGGIDKQSRGNLGYDLPGSRPNRGR) are disordered. Residues 687–697 (LIDDDNSDEEG) are compositionally biased toward acidic residues. One copy of the WD 14 repeat lies at 720–759 (RPIIRTKSLSIAPTGRSFAAATTEGVLIFSIDDTFIFDPT).

Belongs to the WD repeat PWP2 family. As to quaternary structure, component of the ribosomal small subunit (SSU) processome. Interacts with TBP1 in the nucleus. Expressed constitutively and ubiquitously; observed in seeds, seedlings, roots, leaves, stems, flowers and siliques.

The protein resides in the nucleus. It localises to the nucleolus. Involved in nucleolar processing of pre-18S ribosomal RNA. Plays a role early in ribosome biogenesis, especially in the maturation of 5.8S rRNA. Required for guard cell functions. This chain is Periodic tryptophan protein 2, found in Arabidopsis thaliana (Mouse-ear cress).